The chain runs to 535 residues: GMP synthase [glutamine-hydrolyzing] (535 aa).

The Glutamine amidotransferase type-1 domain occupies 24–217 (KILIVDFGSQ…VRKVAGLKGD (194 aa)). C101 (nucleophile) is an active-site residue. Residues H191 and E193 contribute to the active site. One can recognise a GMPS ATP-PPase domain in the interval 218-410 (WTMRAFREEA…LGLPEVFVGR (193 aa)). 245-251 (SGGVDSA) contributes to the ATP binding site.

As to quaternary structure, homodimer.

The catalysed reaction is XMP + L-glutamine + ATP + H2O = GMP + L-glutamate + AMP + diphosphate + 2 H(+). It participates in purine metabolism; GMP biosynthesis; GMP from XMP (L-Gln route): step 1/1. Catalyzes the synthesis of GMP from XMP. This chain is GMP synthase [glutamine-hydrolyzing], found in Rhodopseudomonas palustris (strain BisB18).